We begin with the raw amino-acid sequence, 137 residues long: uncharacterized protein (137 aa).

The disordered stretch occupies residues 67 to 87 (KSERQHQRVHHELPHDKPRQS). Over residues 70–85 (RQHQRVHHELPHDKPR) the composition is skewed to basic and acidic residues.

This is an uncharacterized protein from Human cytomegalovirus (strain AD169) (HHV-5).